The following is a 573-amino-acid chain: 2-succinyl-5-enolpyruvyl-6-hydroxy-3-cyclohexene-1-carboxylate synthase (573 aa).

This sequence belongs to the TPP enzyme family. MenD subfamily. As to quaternary structure, homodimer. The cofactor is Mg(2+). Requires Mn(2+) as cofactor. It depends on thiamine diphosphate as a cofactor.

It carries out the reaction isochorismate + 2-oxoglutarate + H(+) = 5-enolpyruvoyl-6-hydroxy-2-succinyl-cyclohex-3-ene-1-carboxylate + CO2. The protein operates within quinol/quinone metabolism; 1,4-dihydroxy-2-naphthoate biosynthesis; 1,4-dihydroxy-2-naphthoate from chorismate: step 2/7. Its pathway is quinol/quinone metabolism; menaquinone biosynthesis. Its function is as follows. Catalyzes the thiamine diphosphate-dependent decarboxylation of 2-oxoglutarate and the subsequent addition of the resulting succinic semialdehyde-thiamine pyrophosphate anion to isochorismate to yield 2-succinyl-5-enolpyruvyl-6-hydroxy-3-cyclohexene-1-carboxylate (SEPHCHC). The chain is 2-succinyl-5-enolpyruvyl-6-hydroxy-3-cyclohexene-1-carboxylate synthase from Shewanella putrefaciens (strain CN-32 / ATCC BAA-453).